The chain runs to 310 residues: Ribosomal RNA small subunit methyltransferase H (310 aa).

S-adenosyl-L-methionine is bound by residues 33–35 (AGH), Asp53, Tyr83, Asp100, and Gln107.

The protein belongs to the methyltransferase superfamily. RsmH family.

Its subcellular location is the cytoplasm. The catalysed reaction is cytidine(1402) in 16S rRNA + S-adenosyl-L-methionine = N(4)-methylcytidine(1402) in 16S rRNA + S-adenosyl-L-homocysteine + H(+). Its function is as follows. Specifically methylates the N4 position of cytidine in position 1402 (C1402) of 16S rRNA. This is Ribosomal RNA small subunit methyltransferase H from Clostridium perfringens (strain ATCC 13124 / DSM 756 / JCM 1290 / NCIMB 6125 / NCTC 8237 / Type A).